The primary structure comprises 446 residues: Exodeoxyribonuclease 7 large subunit (446 aa).

It belongs to the XseA family. In terms of assembly, heterooligomer composed of large and small subunits.

The protein resides in the cytoplasm. The catalysed reaction is Exonucleolytic cleavage in either 5'- to 3'- or 3'- to 5'-direction to yield nucleoside 5'-phosphates.. Functionally, bidirectionally degrades single-stranded DNA into large acid-insoluble oligonucleotides, which are then degraded further into small acid-soluble oligonucleotides. This Vibrio cholerae serotype O1 (strain ATCC 39315 / El Tor Inaba N16961) protein is Exodeoxyribonuclease 7 large subunit.